The chain runs to 99 residues: Osteocalcin (99 aa).

Residues 1–23 (MRTLSLLTLLALTAFCLSDLAGA) form the signal peptide. A propeptide spanning residues 24 to 49 (KPSDSESDKAFMSKQEGSKVVNRLRR) is cleaved from the precursor. Residues 50-96 (YLNNGLGAPAPYPDPLEPHREVCELNPNCDELADHIGFQDAYKRIYG) form the Gla domain. Hydroxyproline is present on Pro-58. Glu-66, Glu-70, Glu-73, and Asp-79 together coordinate Ca(2+). 4-carboxyglutamate occurs at positions 66, 70, and 73. Cys-72 and Cys-78 are joined by a disulfide.

Belongs to the osteocalcin/matrix Gla protein family. In terms of processing, gamma-carboxyglutamate residues are formed by vitamin K dependent carboxylation by GGCX. These residues are essential for the binding of calcium. Decarboxylation promotes the hormone activity.

It is found in the secreted. Its function is as follows. The carboxylated form is one of the main organic components of the bone matrix, which constitutes 1-2% of the total bone protein: it acts as a negative regulator of bone formation and is required to limit bone formation without impairing bone resorption or mineralization. The carboxylated form binds strongly to apatite and calcium. In terms of biological role, the uncarboxylated form acts as a hormone secreted by osteoblasts, which regulates different cellular processes, such as energy metabolism, male fertility and brain development. Regulates of energy metabolism by acting as a hormone favoring pancreatic beta-cell proliferation, insulin secretion and sensitivity and energy expenditure. Uncarboxylated osteocalcin hormone also promotes testosterone production in the testes: acts as a ligand for G protein-coupled receptor GPRC6A at the surface of Leydig cells, initiating a signaling response that promotes the expression of enzymes required for testosterone synthesis in a CREB-dependent manner. Also acts as a regulator of brain development: osteocalcin hormone crosses the blood-brain barrier and acts as a ligand for GPR158 on neurons, initiating a signaling response that prevents neuronal apoptosis in the hippocampus, favors the synthesis of all monoamine neurotransmitters and inhibits that of gamma-aminobutyric acid (GABA). Osteocalcin also crosses the placenta during pregnancy and maternal osteocalcin is required for fetal brain development. The protein is Osteocalcin (Bglap) of Rattus norvegicus (Rat).